The primary structure comprises 235 residues: Phosphoribosylaminoimidazole-succinocarboxamide synthase (235 aa).

Belongs to the SAICAR synthetase family.

It carries out the reaction 5-amino-1-(5-phospho-D-ribosyl)imidazole-4-carboxylate + L-aspartate + ATP = (2S)-2-[5-amino-1-(5-phospho-beta-D-ribosyl)imidazole-4-carboxamido]succinate + ADP + phosphate + 2 H(+). It functions in the pathway purine metabolism; IMP biosynthesis via de novo pathway; 5-amino-1-(5-phospho-D-ribosyl)imidazole-4-carboxamide from 5-amino-1-(5-phospho-D-ribosyl)imidazole-4-carboxylate: step 1/2. The polypeptide is Phosphoribosylaminoimidazole-succinocarboxamide synthase (Nautilia profundicola (strain ATCC BAA-1463 / DSM 18972 / AmH)).